A 497-amino-acid polypeptide reads, in one-letter code: L-carnitine dehydrogenase/betainyl-CoA thioesterase (497 aa).

Residues 1–335 (MSFITKAACV…AKLWANARKP (335 aa)) are L-carnitine dehydrogenase. 11–16 (GGGVIG) is a binding site for NAD(+). The interval 330 to 335 (ANARKP) is important for dehydrogenase activity. The segment at 336–497 (EADLGDVKPL…AGRFVGQKRA (162 aa)) is betainyl-CoA thioesterase.

It in the N-terminal section; belongs to the 3-hydroxyacyl-CoA dehydrogenase family. L-carnitine dehydrogenase subfamily. This sequence in the C-terminal section; belongs to the betainyl-CoA thioesterase family. In terms of assembly, homodimer.

The protein resides in the cytoplasm. The catalysed reaction is carnitine + NAD(+) = 3-dehydrocarnitine + NADH + H(+). It carries out the reaction N,N,N-trimethylglycyl-CoA + H2O = glycine betaine + CoA + H(+). It functions in the pathway amine and polyamine metabolism; carnitine metabolism. In terms of biological role, catalyzes the NAD(+)-dependent oxidation of L-carnitine to 3-dehydrocarnitine. Probably also catalyzes the cleavage of betainyl-CoA (N,N,N-trimethylglycyl-CoA) into glycine betaine and coenzyme A. Despite a high similarity to 3-hydroxyacyl-CoA dehydrogenases, cannot dehydrogenate 3-hydroxybutylate and 3-hydroxybutyl-CoA. Is probably involved in a L-carnitine degradation pathway that allows Rhizobium sp. YS-240 to grow on L-carnitine as the sole source of carbon and nitrogen. The chain is L-carnitine dehydrogenase/betainyl-CoA thioesterase from Rhizobium sp.